The sequence spans 334 residues: Phenylalanine--tRNA ligase alpha subunit (334 aa).

Glutamate 249 contributes to the Mg(2+) binding site.

This sequence belongs to the class-II aminoacyl-tRNA synthetase family. Phe-tRNA synthetase alpha subunit type 1 subfamily. In terms of assembly, tetramer of two alpha and two beta subunits. It depends on Mg(2+) as a cofactor.

The protein resides in the cytoplasm. The enzyme catalyses tRNA(Phe) + L-phenylalanine + ATP = L-phenylalanyl-tRNA(Phe) + AMP + diphosphate + H(+). This Desulfatibacillum aliphaticivorans protein is Phenylalanine--tRNA ligase alpha subunit.